Consider the following 501-residue polypeptide: L-lysine transport protein (501 aa).

A run of 13 helical transmembrane segments spans residues 25–41, 52–76, 92–113, 138–155, 174–191, 214–232, 247–269, 292–316, 340–362, 377–393, 424–440, 447–463, and 477–495; these read LIAL…IFSI, GAML…HVLA, VGLG…SVIA, FVSA…FGVV, ILPL…GFSW, GIMV…ASVY, VIGF…GVLT, WGAA…QMLC, GAAW…IFFL, LYLV…VMLA, LIVG…LFYA, LFGA…YVWT, and IGVV…IGLV.

Belongs to the amino acid-polyamine-organocation (APC) superfamily. Basic amino acid/polyamine antiporter (APA) (TC 2.A.3.2) family.

The protein resides in the cell membrane. Permease that is involved in the transport across the membrane of lysine. The chain is L-lysine transport protein (lysI) from Corynebacterium glutamicum (strain ATCC 13032 / DSM 20300 / JCM 1318 / BCRC 11384 / CCUG 27702 / LMG 3730 / NBRC 12168 / NCIMB 10025 / NRRL B-2784 / 534).